A 160-amino-acid polypeptide reads, in one-letter code: NADH-quinone oxidoreductase subunit B (160 aa).

Residues cysteine 37, cysteine 38, cysteine 102, and cysteine 132 each contribute to the [4Fe-4S] cluster site.

Belongs to the complex I 20 kDa subunit family. As to quaternary structure, NDH-1 is composed of 14 different subunits. Subunits NuoB, C, D, E, F, and G constitute the peripheral sector of the complex. The cofactor is [4Fe-4S] cluster.

It is found in the cell inner membrane. The catalysed reaction is a quinone + NADH + 5 H(+)(in) = a quinol + NAD(+) + 4 H(+)(out). In terms of biological role, NDH-1 shuttles electrons from NADH, via FMN and iron-sulfur (Fe-S) centers, to quinones in the respiratory chain. Couples the redox reaction to proton translocation (for every two electrons transferred, four hydrogen ions are translocated across the cytoplasmic membrane), and thus conserves the redox energy in a proton gradient. This is NADH-quinone oxidoreductase subunit B from Cupriavidus pinatubonensis (strain JMP 134 / LMG 1197) (Cupriavidus necator (strain JMP 134)).